Consider the following 339-residue polypeptide: DNA-directed RNA polymerase subunit alpha (339 aa).

Positions 1–233 (MVREEVAGST…DLFLPFLHAE (233 aa)) are alpha N-terminal domain (alpha-NTD). An alpha C-terminal domain (alpha-CTD) region spans residues 264–339 (KKGIPLNCIF…IDLLKNKLSF (76 aa)).

It belongs to the RNA polymerase alpha chain family. In terms of assembly, in plastids the minimal PEP RNA polymerase catalytic core is composed of four subunits: alpha, beta, beta', and beta''. When a (nuclear-encoded) sigma factor is associated with the core the holoenzyme is formed, which can initiate transcription.

It localises to the plastid. The protein localises to the chloroplast. It carries out the reaction RNA(n) + a ribonucleoside 5'-triphosphate = RNA(n+1) + diphosphate. DNA-dependent RNA polymerase catalyzes the transcription of DNA into RNA using the four ribonucleoside triphosphates as substrates. The chain is DNA-directed RNA polymerase subunit alpha from Aegilops uniaristata (Goatgrass).